A 253-amino-acid chain; its full sequence is Indole-3-glycerol phosphate synthase (253 aa).

This sequence belongs to the TrpC family.

The enzyme catalyses 1-(2-carboxyphenylamino)-1-deoxy-D-ribulose 5-phosphate + H(+) = (1S,2R)-1-C-(indol-3-yl)glycerol 3-phosphate + CO2 + H2O. Its pathway is amino-acid biosynthesis; L-tryptophan biosynthesis; L-tryptophan from chorismate: step 4/5. The protein is Indole-3-glycerol phosphate synthase of Bacillus cereus (strain G9842).